Reading from the N-terminus, the 175-residue chain is Disulfide bond formation protein B (175 aa).

Topologically, residues 1 to 13 (MTAFTRFAHSRAS) are cytoplasmic. Residues 14 to 30 (WLILTGSAIALEAAALY) form a helical membrane-spanning segment. Residues 31-48 (FQYVMKLDPCVMCIYQRL) are Periplasmic-facing. C40 and C43 are joined by a disulfide. The helical transmembrane segment at 49–64 (AVFGILAAGLIGMTAP) threads the bilayer. Over 65-71 (KYRIVRI) the chain is Cytoplasmic. Residues 72-89 (LGALGWAVSATWGLKLAL) traverse the membrane as a helical segment. The Periplasmic segment spans residues 90–144 (ALVDMQNNPSPFSTCSFLPEFPAWMPLHEWFPSVMLPTGMCTDVPWQFMGVTMAE). C104 and C130 are disulfide-bonded. A helical transmembrane segment spans residues 145-163 (WMVVAFSGYLVALLLFIVP). The Cytoplasmic segment spans residues 164–175 (ILSGSNKPSLYK).

This sequence belongs to the DsbB family.

The protein resides in the cell inner membrane. In terms of biological role, required for disulfide bond formation in some periplasmic proteins. Acts by oxidizing the DsbA protein. This chain is Disulfide bond formation protein B, found in Shewanella sp. (strain MR-4).